Reading from the N-terminus, the 381-residue chain is Peptidoglycan transport system permease protein YejE (381 aa).

The next 5 helical transmembrane spans lie at 38-58 (YWSF…EFIA), 183-203 (VLFG…AGAI), 230-250 (ILLI…GIML), 292-312 (LLPN…SGSI), and 347-367 (WLGL…IFVG). Residues 179–371 (FRISVLFGLT…LLIFVGEAVR (193 aa)) enclose the ABC transmembrane type-1 domain.

It belongs to the binding-protein-dependent transport system permease family. As to quaternary structure, the complex is composed of one ATP-binding protein (YejF), two transmembrane proteins (YejB and YejE) and a solute-binding protein (YepA or YejA).

The protein localises to the cell inner membrane. Functionally, part of the ABC transporter complex YejBEF-YepA involved in the uptake of muropeptides, the breakdown products of cell wall peptidoglycan. The import of muropeptides into the cell enables peptidoglycan recycling, which is vital for cell wall integrity in this bacterium. Is also probably part of the ABC transporter complex YejABEF, which is likely involved in broad-spectrum peptide import. Responsible for the translocation of the substrate across the membrane. This chain is Peptidoglycan transport system permease protein YejE, found in Agrobacterium fabrum (strain C58 / ATCC 33970) (Agrobacterium tumefaciens (strain C58)).